Here is a 386-residue protein sequence, read N- to C-terminus: Homogentisate solanesyltransferase, chloroplastic (386 aa).

A chloroplast-targeting transit peptide spans 1–69; the sequence is MELSISQSPR…STNYRKISIR (69 aa). A run of 8 helical transmembrane segments spans residues 130-150, 181-201, 204-220, 225-245, 259-279, 306-326, 335-355, and 365-385; these read VLKALSGLLALICGNGYIVGI, LVIFFAIAGLLVVGFNFGPFI, LYSLGLFLGTIYSVPPL, FPVAAFLIIATVRGFLLNFGV, WSAPVAFITSFVTLFALVIAI, IAFLGSGLLLVNYVSAISLAF, SLMIPAHVILASGLIFQTWVL, and ISGYYRFIWNLFYAEYLLFPF.

Belongs to the UbiA prenyltransferase family.

The protein resides in the plastid. It localises to the chloroplast membrane. The enzyme catalyses all-trans-nonaprenyl diphosphate + homogentisate + H(+) = 2-methyl-6-(all-trans-nonaprenyl)benzene-1,4-diol + CO2 + diphosphate. Its activity is regulated as follows. Inhibited by haloxydine (3,5-dichloro-2,6-difluoro-4-haloxypyridine). Involved in the synthesis of plastoquinone-9. Can use both homogentisic acid and 2,5-dihydroxyphenylacetic acid gamma-lactone as prenyl acceptors, and solanesyl diphosphate &gt; farnesyl diphosphate &gt; geranylgeranyl diphosphate &gt;&gt; phytyl diphosphate as prenyl donors. Do not catalyze the decardoxylation of homogentisate uncoupled from prenylation. The protein is Homogentisate solanesyltransferase, chloroplastic (HST) of Arabidopsis thaliana (Mouse-ear cress).